Consider the following 295-residue polypeptide: Indole-3-glycerol phosphate synthase (295 aa).

This sequence belongs to the TrpC family.

It catalyses the reaction 1-(2-carboxyphenylamino)-1-deoxy-D-ribulose 5-phosphate + H(+) = (1S,2R)-1-C-(indol-3-yl)glycerol 3-phosphate + CO2 + H2O. It participates in amino-acid biosynthesis; L-tryptophan biosynthesis; L-tryptophan from chorismate: step 4/5. The sequence is that of Indole-3-glycerol phosphate synthase from Synechococcus sp. (strain CC9605).